The primary structure comprises 539 residues: Tyrosinase (539 aa).

Cu cation-binding residues include His63, His84, His93, His290, His294, and His333. The 2'-(S-cysteinyl)-histidine (Cys-His) cross-link spans 82 to 84 (CHH).

The protein belongs to the tyrosinase family. In terms of assembly, homotetramer. The cofactor is Cu(2+). The N-terminus is blocked.

It carries out the reaction 2 L-dopa + O2 = 2 L-dopaquinone + 2 H2O. It catalyses the reaction L-tyrosine + O2 = L-dopaquinone + H2O. Its activity is regulated as follows. Activated by acidifying treatment at pH 3.0. In terms of biological role, this is a copper-containing oxidase that functions in the formation of pigments such as melanins and other polyphenolic compounds. The protein is Tyrosinase (melO) of Aspergillus oryzae (strain ATCC 42149 / RIB 40) (Yellow koji mold).